Consider the following 288-residue polypeptide: MTDAQIENKFKLAVDYITNNSGKLSNIKNEEQLYLYCNYKQATIGDCNTKAPPFYDYIGKSKWNSWNSLKGVEKIVAMNSYISLVNALSPGWDSNIKVERATQSVFLNDEEFKELEKKEKEEKEELKKLEEENGGEIEKPKSKWMGPVLSKFSLVDDETLEKLEKNTKQDLGYWVSVNDIERVKKEIENDKNIINEVDEDGRTALIWACDRGYFEIAKLLIENGSNVNVQDGEGMTPLHYAVVCDQFEICKLLLSQSSIDKSIKDNSDSIPSDFIDSSTSENIKSLFK.

Residues 6–94 form the ACB domain; that stretch reads IENKFKLAVD…VNALSPGWDS (89 aa). Residues 36–40, Lys62, and Tyr81 each bind an acyl-CoA; that span reads YCNYK. ANK repeat units follow at residues 200-229 and 233-263; these read DGRT…NVNV and EGMT…DKSI.

It localises to the cytoplasm. Its function is as follows. Binds long-chain acyl-coenzyme A molecules with a strong preference for unsaturated C18:1-CoA. Does not bind fatty acids. Plays a role in protein N-myristoylation. In Dictyostelium discoideum (Social amoeba), this protein is Acyl-CoA-binding domain-containing protein 6 homolog (acbd6).